A 273-amino-acid polypeptide reads, in one-letter code: ATP synthase subunit delta (273 aa).

Positions 55–78 (TDPAQSARPRPSSPSVSSAPRSAA) are disordered. A compositionally biased stretch (low complexity) spans 57–78 (PAQSARPRPSSPSVSSAPRSAA).

It belongs to the ATPase delta chain family. As to quaternary structure, F-type ATPases have 2 components, F(1) - the catalytic core - and F(0) - the membrane proton channel. F(1) has five subunits: alpha(3), beta(3), gamma(1), delta(1), epsilon(1). F(0) has three main subunits: a(1), b(2) and c(10-14). The alpha and beta chains form an alternating ring which encloses part of the gamma chain. F(1) is attached to F(0) by a central stalk formed by the gamma and epsilon chains, while a peripheral stalk is formed by the delta and b chains.

It localises to the cell membrane. In terms of biological role, f(1)F(0) ATP synthase produces ATP from ADP in the presence of a proton or sodium gradient. F-type ATPases consist of two structural domains, F(1) containing the extramembraneous catalytic core and F(0) containing the membrane proton channel, linked together by a central stalk and a peripheral stalk. During catalysis, ATP synthesis in the catalytic domain of F(1) is coupled via a rotary mechanism of the central stalk subunits to proton translocation. This protein is part of the stalk that links CF(0) to CF(1). It either transmits conformational changes from CF(0) to CF(1) or is implicated in proton conduction. This Streptomyces lividans protein is ATP synthase subunit delta.